The following is a 365-amino-acid chain: Probable L-tyrosine/L-aspartate decarboxylase (365 aa).

Lys-225 carries the N6-(pyridoxal phosphate)lysine modification.

It belongs to the group II decarboxylase family. MfnA subfamily. Pyridoxal 5'-phosphate is required as a cofactor.

It carries out the reaction L-tyrosine + H(+) = tyramine + CO2. The catalysed reaction is L-aspartate + H(+) = beta-alanine + CO2. It participates in cofactor biosynthesis; methanofuran biosynthesis. The protein operates within cofactor biosynthesis; coenzyme A biosynthesis. Its function is as follows. Catalyzes the decarboxylation of L-tyrosine to produce tyramine for methanofuran biosynthesis. Can also catalyze the decarboxylation of L-aspartate to produce beta-alanine for coenzyme A (CoA) biosynthesis. The chain is Probable L-tyrosine/L-aspartate decarboxylase from Methanocorpusculum labreanum (strain ATCC 43576 / DSM 4855 / Z).